The primary structure comprises 135 residues: Calcium-binding protein KIC (135 aa).

Residues 74 to 109 (MSKEDAQGMVREGDLDGDGALNQTEFCVLMVRLSPE) enclose the EF-hand domain. Positions 87, 89, 91, and 98 each coordinate Ca(2+).

In terms of assembly, interacts with KCBP (via C-terminus). KIC and calmodulin show competitive binding to KCBP. Interacts with CML42. Binds to ABCG36. Expressed in stems, leaves and flowers.

Functionally, calcium-binding regulatory protein that interacts with kinesin motor protein KCBP in a calcium-dependent manner. Inhibits KCBP microtubule binding activity and microtubule-stimulated ATPase activity. Involved in the regulation of trichome branching through its interaction with KCBP. This is Calcium-binding protein KIC from Arabidopsis thaliana (Mouse-ear cress).